We begin with the raw amino-acid sequence, 95 residues long: Cobalt transport protein CbiN (95 aa).

Transmembrane regions (helical) follow at residues 5–25 and 67–87; these read HILM…IYSG and LLFA…FGYY.

Belongs to the CbiN family. In terms of assembly, forms an energy-coupling factor (ECF) transporter complex composed of an ATP-binding protein (A component, CbiO), a transmembrane protein (T component, CbiQ) and 2 possible substrate-capture proteins (S components, CbiM and CbiN) of unknown stoichimetry.

The protein resides in the cell membrane. The protein operates within cofactor biosynthesis; adenosylcobalamin biosynthesis. In terms of biological role, part of the energy-coupling factor (ECF) transporter complex CbiMNOQ involved in cobalt import. This Methanothermobacter thermautotrophicus (strain ATCC 29096 / DSM 1053 / JCM 10044 / NBRC 100330 / Delta H) (Methanobacterium thermoautotrophicum) protein is Cobalt transport protein CbiN.